Consider the following 305-residue polypeptide: Homoserine O-acetyltransferase (305 aa).

The active-site Acyl-thioester intermediate is the C142. Positions 163 and 192 each coordinate substrate. H235 acts as the Proton acceptor in catalysis. Residue E237 is part of the active site. Position 249 (R249) interacts with substrate.

The protein belongs to the MetA family.

Its subcellular location is the cytoplasm. The enzyme catalyses L-homoserine + acetyl-CoA = O-acetyl-L-homoserine + CoA. It participates in amino-acid biosynthesis; L-methionine biosynthesis via de novo pathway; O-acetyl-L-homoserine from L-homoserine: step 1/1. Its function is as follows. Transfers an acetyl group from acetyl-CoA to L-homoserine, forming acetyl-L-homoserine. The chain is Homoserine O-acetyltransferase from Acetivibrio thermocellus (strain ATCC 27405 / DSM 1237 / JCM 9322 / NBRC 103400 / NCIMB 10682 / NRRL B-4536 / VPI 7372) (Clostridium thermocellum).